A 334-amino-acid polypeptide reads, in one-letter code: MYNTDIVIIGSGPVGLFAVFQAGMLGMKCHVIDAQEVIGGQCITLYPEKHIYDIPAYPKITAKELIEQLKSQAAPFNPVYHLNQQAIELNKHNDFFEIKTSKNTIIKSKVIIIAAGAGAFGPNKPPLANIEDFEGKSIFYFINDKSKFLGKNIVVAGGGDSAVDWTIALSEIANKIYLVHRRDKFTAATESIRQLRHIAETGKIELVTGYQLNNLDGHNNELQAVIVKDLQNNIRKLDANILLPFFGLKQDLGPLANWGLNVKLQHIEVDNYYYQTNIKGIYAIGDVAHYVGKLKLIITGFAEAAHSINHAYSRVFDGKALHFEYSTNKYEQKQ.

7 residues coordinate FAD: Asp-33, Gln-41, Tyr-46, Ala-86, Phe-120, Asp-286, and Thr-327.

It belongs to the ferredoxin--NADP reductase type 2 family. In terms of assembly, homodimer. Requires FAD as cofactor.

The catalysed reaction is 2 reduced [2Fe-2S]-[ferredoxin] + NADP(+) + H(+) = 2 oxidized [2Fe-2S]-[ferredoxin] + NADPH. The protein is Ferredoxin--NADP reductase of Rickettsia typhi (strain ATCC VR-144 / Wilmington).